A 351-amino-acid polypeptide reads, in one-letter code: Transaldolase (351 aa).

Catalysis depends on K138, which acts as the Schiff-base intermediate with substrate.

It belongs to the transaldolase family. Type 2 subfamily.

The protein resides in the cytoplasm. It catalyses the reaction D-sedoheptulose 7-phosphate + D-glyceraldehyde 3-phosphate = D-erythrose 4-phosphate + beta-D-fructose 6-phosphate. The protein operates within carbohydrate degradation; pentose phosphate pathway; D-glyceraldehyde 3-phosphate and beta-D-fructose 6-phosphate from D-ribose 5-phosphate and D-xylulose 5-phosphate (non-oxidative stage): step 2/3. Functionally, transaldolase is important for the balance of metabolites in the pentose-phosphate pathway. In Neisseria meningitidis serogroup C (strain 053442), this protein is Transaldolase.